The chain runs to 276 residues: Diaminopimelate epimerase (276 aa).

Substrate-binding residues include Asn-13, Gln-46, and Asn-66. Cys-75 serves as the catalytic Proton donor. Residues 76–77 (GN), Asn-159, Asn-192, and 210–211 (ER) contribute to the substrate site. The active-site Proton acceptor is the Cys-219. 220-221 (GT) lines the substrate pocket.

This sequence belongs to the diaminopimelate epimerase family. In terms of assembly, homodimer.

The protein localises to the cytoplasm. It carries out the reaction (2S,6S)-2,6-diaminopimelate = meso-2,6-diaminopimelate. It participates in amino-acid biosynthesis; L-lysine biosynthesis via DAP pathway; DL-2,6-diaminopimelate from LL-2,6-diaminopimelate: step 1/1. In terms of biological role, catalyzes the stereoinversion of LL-2,6-diaminopimelate (L,L-DAP) to meso-diaminopimelate (meso-DAP), a precursor of L-lysine and an essential component of the bacterial peptidoglycan. In Teredinibacter turnerae (strain ATCC 39867 / T7901), this protein is Diaminopimelate epimerase.